The chain runs to 1972 residues: TP53-binding protein 1 (1972 aa).

Disordered stretches follow at residues 24-273 (DSQP…VAAM), 290-332 (QIQK…CSLA), and 346-507 (GQRS…LGLS). Phosphoserine is present on residues serine 25 and serine 63. Positions 82–91 (EHLKENKVAD) are enriched in basic and acidic residues. Over residues 94–121 (DSSNLDTCGSISQVIEQLPQPNRTSSVL) the composition is skewed to polar residues. Residues serine 105 and serine 124 each carry the phosphoserine modification. Residues 138–149 (ELEQKEKEKEED) show a composition bias toward basic and acidic residues. A compositionally biased stretch (polar residues) spans 151 to 168 (SGNTTHSLGAEDTASSQL). 3 positions are modified to phosphoserine: serine 166, serine 176, and serine 178. A compositionally biased stretch (polar residues) spans 195–205 (LQSVTTNSGYT). A Glycyl lysine isopeptide (Lys-Gly) (interchain with G-Cter in SUMO1); alternate cross-link involves residue lysine 217. Residue lysine 217 forms a Glycyl lysine isopeptide (Lys-Gly) (interchain with G-Cter in SUMO2); alternate linkage. A phosphoserine mark is found at serine 222, serine 265, and serine 294. Polar residues-rich tracts occupy residues 300–322 (LSTQEDLFDQSNKTVSSDGCSTP) and 346–361 (GQRSLVQDSLSTNSSD). A Phosphothreonine modification is found at threonine 302. Serine 366, serine 380, serine 395, serine 398, serine 429, serine 452, and serine 464 each carry phosphoserine. Polar residues predominate over residues 426 to 441 (STVSPQASTPISQSTP). The span at 442–452 (VFPPGSLPIPS) shows a compositional bias: pro residues. Residues 481-490 (HSSSLTVECS) are compositionally biased toward polar residues. Positions 491–501 (KTSEIEPKNSP) are enriched in basic and acidic residues. Serine 500, serine 507, serine 518, serine 523, and serine 525 each carry phosphoserine. Residues 520–531 (SEYSQSPKMESL) show a composition bias toward polar residues. The segment at 520-556 (SEYSQSPKMESLSSHRIDEDGENTQIEDTEPMSPVLN) is disordered. Acidic residues predominate over residues 538 to 549 (EDGENTQIEDTE). Phosphothreonine is present on residues threonine 543 and threonine 548. A phosphoserine mark is found at serine 552, serine 566, and serine 580. The segment at 568 to 595 (LMNPAQDGEVQLSQNDDKTKGDDTDTRD) is disordered. Over residues 582-595 (NDDKTKGDDTDTRD) the composition is skewed to basic and acidic residues. Phosphoserine occurs at positions 630, 635, 639, and 640. The segment at 649-687 (EIKEHHPEEGSSGSEVEEIPETPCESQGEELKEENMESV) is disordered. At threonine 670 the chain carries Phosphothreonine. Phosphoserine is present on residues serine 692, serine 724, serine 727, serine 771, serine 809, serine 830, serine 831, and serine 834. A disordered region spans residues 742-911 (EQEAWEEATS…TPFHFTLPKE (170 aa)). Residues 798 to 816 (AENRLDTKEEKSVEYEGDL) are compositionally biased toward basic and acidic residues. Over residues 839-848 (RADDPLRLDQ) the composition is skewed to basic and acidic residues. The span at 849–864 (ELQQPQTQEKTSNSLT) shows a compositional bias: polar residues. At threonine 855 the chain carries Phosphothreonine. Residue lysine 868 forms a Glycyl lysine isopeptide (Lys-Gly) (interchain with G-Cter in SUMO1); alternate linkage. Lysine 868 participates in a covalent cross-link: Glycyl lysine isopeptide (Lys-Gly) (interchain with G-Cter in SUMO2); alternate. Positions 890 to 902 (HASQSFCESSSET) are enriched in polar residues. Phosphothreonine is present on threonine 922. Residue lysine 930 forms a Glycyl lysine isopeptide (Lys-Gly) (interchain with G-Cter in SUMO2) linkage. 2 positions are modified to phosphoserine: serine 970 and serine 975. Lysine 984 participates in a covalent cross-link: Glycyl lysine isopeptide (Lys-Gly) (interchain with G-Cter in SUMO2). Disordered stretches follow at residues 997–1028 (EASEESLQFNLEKPATGERKNGSTAVAESVAS) and 1045–1103 (ENEA…VSPA). Over residues 1018-1028 (GSTAVAESVAS) the composition is skewed to polar residues. Phosphoserine is present on serine 1028. Threonine 1056 carries the phosphothreonine modification. Residue serine 1068 is modified to Phosphoserine. Residues 1071–1083 (EEEKEKLEGDHTI) are compositionally biased toward basic and acidic residues. Phosphoserine occurs at positions 1086, 1094, 1101, and 1114. Over residues 1127 to 1139 (DQKEGRSTNKENP) the composition is skewed to basic and acidic residues. Disordered regions lie at residues 1127-1148 (DQKEGRSTNKENPSKALIERPS), 1188-1232 (NFGK…QPPH), and 1269-1478 (VTEE…DGLD). A Phosphoserine modification is found at serine 1148. Residues 1188–1200 (NFGKQDATVQTER) are compositionally biased toward polar residues. Threonine 1214 bears the Phosphothreonine mark. Serine 1216 and serine 1219 each carry phosphoserine. A compositionally biased stretch (acidic residues) spans 1272-1285 (ETEEPIVECQECET). Composition is skewed to low complexity over residues 1298 to 1307 (DLGDISSFSS) and 1316 to 1329 (SSGTSLSAMHSSGS). A phosphoserine mark is found at serine 1317 and serine 1342. At arginine 1355 the chain carries Omega-N-methylarginine. Phosphoserine is present on serine 1362. A Glycyl lysine isopeptide (Lys-Gly) (interchain with G-Cter in SUMO2) cross-link involves residue lysine 1365. Phosphoserine is present on serine 1368. Position 1372 is a phosphothreonine (threonine 1372). Positions 1396 to 1403 (RGRGRRGR) match the GAR motif. 2 positions are modified to phosphoserine: serine 1426 and serine 1430. A Glycyl lysine isopeptide (Lys-Gly) (interchain with G-Cter in SUMO1); alternate cross-link involves residue lysine 1434. Residue lysine 1434 forms a Glycyl lysine isopeptide (Lys-Gly) (interchain with G-Cter in SUMO2); alternate linkage. Phosphoserine occurs at positions 1460, 1462, and 1474. Residues 1484–1603 (NSFVGLRVVA…NRLREQYGLG (120 aa)) are tudor-like. Positions 1495–1523 (WSSNGYFYSGKITRDVGAGKYKLLFDDGY) are interaction with dimethylated histone H4. Lysine 1563 is covalently cross-linked (Glycyl lysine isopeptide (Lys-Gly) (interchain with G-Cter in SUMO1); alternate). Lysine 1563 participates in a covalent cross-link: Glycyl lysine isopeptide (Lys-Gly) (interchain with G-Cter in SUMO2); alternate. The UDR motif lies at 1604 to 1631 (PYEAVTPLTKAADISLDNLVEGKRKRRS). Residue threonine 1609 is modified to Phosphothreonine. Phosphoserine occurs at positions 1618, 1631, and 1635. Disordered regions lie at residues 1622–1719 (LVEG…EEQR) and 1745–1768 (LASRSKLPDGPTGSSEEEEEFLEI). Residues 1634-1650 (SSPATPTASSSSSTTPT) are compositionally biased toward low complexity. A phosphothreonine mark is found at threonine 1638 and threonine 1648. Phosphoserine occurs at positions 1656, 1673, and 1678. Lysine 1685 is covalently cross-linked (Glycyl lysine isopeptide (Lys-Gly) (interchain with G-Cter in ubiquitin)). Phosphoserine occurs at positions 1701, 1759, and 1778. 2 consecutive BRCT domains span residues 1724–1848 (LNKT…NYLL) and 1864–1964 (PREN…QHPK).

As to quaternary structure, homoligomer. Interacts with p53/TP53 (via the central domain). Interacts with DCLRE1C. Interacts with histone H2AX and this requires phosphorylation of H2AX on 'Ser-139'. Interacts with histone H4 that has been dimethylated at 'Lys-20' (H4K20me2). Has low affinity for histone H4 containing monomethylated 'Lys-20' (H4K20me1). Does not bind histone H4 containing unmethylated or trimethylated 'Lys-20' (H4K20me3). Has low affinity for histone H3 that has been dimethylated on 'Lys-79'. Has very low affinity for histone H3 that has been monomethylated on 'Lys-79' (in vitro). Does not bind unmethylated histone H3. Interacts with histone H2A monoubiquitinated at 'Lys-15' (H2AK15Ub). Interacts with PWWP3A/EXPAND1. Interacts with CHEK2; modulates CHEK2 phosphorylation at 'Thr-68' in response to infrared. Interacts with MSL1; this interaction may be required for MSL1 DNA repair activity, but not for histone acetyltransferase activity. Interacts (when phosphorylated by ATM) with RIF1. Interacts (via the Tudor-like domain) with NUDT16L1/TIRR; interaction masks the Tudor-like domain and prevents recruitment to chromatin. Interacts with PAXIP1. Interacts with SHLD2. Interacts (when phosphorylated) with TOPBP1. Interacts with GFI1; promoting methylation by PRMT1. Interacts with (phosphorylated) DYNLL1; specifically binds DYNLL1 phosphorylated at 'Ser-88' and promotes its recruitment to double stand breaks (DSBs). In terms of assembly, (Microbial infection) Interacts (via C-terminus) with Epstein-Barr virus lytic switch protein BZLF1 (via C-terminus); this interaction is involved in the activation of the viral lytic cycle. Asymmetrically dimethylated on Arg residues by PRMT1. Methylation is required for DNA binding. Post-translationally, phosphorylated at basal level in the absence of DNA damage. Phosphorylated by ATM in response to DNA damage: phosphorylation at different sites promotes interaction with different set of proteins: phosphorylation at the N-terminus by ATM (residues from 6-178) promotes interaction with PAXIP1 and non-homologous end joining (NHEJ) of dysfunctional telomeres. Phosphorylation by ATM at residues that are located more C-terminus (residues 300-650) leads to promote interaction with RIF1. Interaction with RIF1 leads to disrupt interaction with NUDT16L1/TIRR. Phosphorylation at Thr-1609 and Ser-1618 in the UDR motif blocks interaction with H2AK15ub. Dephosphorylated by PPP4C. Hyperphosphorylation during mitosis correlates with its exclusion from chromatin and DNA lesions. Hyperphosphorylated in an ATR-dependent manner in response to DNA damage induced by UV irradiation. Dephosphorylated by PPP5C. Phosphorylation at Ser-366 and Thr-670 promotes interaction with TOPBP1. Phosphorylated by VRK1. In terms of processing, monoubiquitinated at Lys-1685 by MSL2 is reponse to DNA damage, leading to its stabilization.

Its subcellular location is the nucleus. It is found in the chromosome. The protein localises to the centromere. It localises to the kinetochore. In terms of biological role, double-strand break (DSB) repair protein involved in response to DNA damage, telomere dynamics and class-switch recombination (CSR) during antibody genesis. Plays a key role in the repair of double-strand DNA breaks (DSBs) in response to DNA damage by promoting non-homologous end joining (NHEJ)-mediated repair of DSBs and specifically counteracting the function of the homologous recombination (HR) repair protein BRCA1. In response to DSBs, phosphorylation by ATM promotes interaction with RIF1 and dissociation from NUDT16L1/TIRR, leading to recruitment to DSBs sites. Recruited to DSBs sites by recognizing and binding histone H2A monoubiquitinated at 'Lys-15' (H2AK15Ub) and histone H4 dimethylated at 'Lys-20' (H4K20me2), two histone marks that are present at DSBs sites. Required for immunoglobulin class-switch recombination (CSR) during antibody genesis, a process that involves the generation of DNA DSBs. Participates in the repair and the orientation of the broken DNA ends during CSR. In contrast, it is not required for classic NHEJ and V(D)J recombination. Promotes NHEJ of dysfunctional telomeres via interaction with PAXIP1. The chain is TP53-binding protein 1 from Homo sapiens (Human).